The sequence spans 152 residues: Transcriptional regulator MraZ (152 aa).

2 consecutive SpoVT-AbrB domains span residues 5-52 (ASAI…PLEA) and 81-124 (AHEC…DEAA).

Belongs to the MraZ family. Forms oligomers.

Its subcellular location is the cytoplasm. The protein localises to the nucleoid. The polypeptide is Transcriptional regulator MraZ (Shewanella loihica (strain ATCC BAA-1088 / PV-4)).